A 445-amino-acid chain; its full sequence is Putative MgpC-like protein MPN_464 (445 aa).

The tract at residues 23–44 (STTVAVQKSDSSGSQGQGTTDN) is disordered. Residues 31 to 43 (SDSSGSQGQGTTD) are compositionally biased toward low complexity.

It belongs to the MgpC family.

In Mycoplasma pneumoniae (strain ATCC 29342 / M129 / Subtype 1) (Mycoplasmoides pneumoniae), this protein is Putative MgpC-like protein MPN_464.